Consider the following 401-residue polypeptide: Acetate kinase (401 aa).

N9 provides a ligand contact to Mg(2+). Position 16 (K16) interacts with ATP. A substrate-binding site is contributed by R88. D147 serves as the catalytic Proton donor/acceptor. Residues 207–211 (HLGNG), 282–284 (DCR), and 333–337 (GIGEN) each bind ATP. E388 contacts Mg(2+).

Belongs to the acetokinase family. Homodimer. The cofactor is Mg(2+). Mn(2+) is required as a cofactor.

It localises to the cytoplasm. It catalyses the reaction acetate + ATP = acetyl phosphate + ADP. Its pathway is metabolic intermediate biosynthesis; acetyl-CoA biosynthesis; acetyl-CoA from acetate: step 1/2. In terms of biological role, catalyzes the formation of acetyl phosphate from acetate and ATP. Can also catalyze the reverse reaction. The polypeptide is Acetate kinase (Haemophilus influenzae (strain 86-028NP)).